The chain runs to 118 residues: ATP synthase subunit c (118 aa).

2 consecutive transmembrane segments (helical) span residues 34–54 and 88–108; these read AIFA…GAVG and MAMA…LIFA.

Belongs to the ATPase C chain family. F-type ATPases have 2 components, F(1) - the catalytic core - and F(0) - the membrane proton channel. F(1) has five subunits: alpha(3), beta(3), gamma(1), delta(1), epsilon(1). F(0) has three main subunits: a(1), b(2) and c(10-14). The alpha and beta chains form an alternating ring which encloses part of the gamma chain. F(1) is attached to F(0) by a central stalk formed by the gamma and epsilon chains, while a peripheral stalk is formed by the delta and b chains.

It is found in the cell inner membrane. Its function is as follows. F(1)F(0) ATP synthase produces ATP from ADP in the presence of a proton or sodium gradient. F-type ATPases consist of two structural domains, F(1) containing the extramembraneous catalytic core and F(0) containing the membrane proton channel, linked together by a central stalk and a peripheral stalk. During catalysis, ATP synthesis in the catalytic domain of F(1) is coupled via a rotary mechanism of the central stalk subunits to proton translocation. In terms of biological role, key component of the F(0) channel; it plays a direct role in translocation across the membrane. A homomeric c-ring of between 10-14 subunits forms the central stalk rotor element with the F(1) delta and epsilon subunits. The sequence is that of ATP synthase subunit c from Syntrophus aciditrophicus (strain SB).